The primary structure comprises 88 residues: UPF0297 protein RBAM_024500 (88 aa).

It belongs to the UPF0297 family.

The polypeptide is UPF0297 protein RBAM_024500 (Bacillus velezensis (strain DSM 23117 / BGSC 10A6 / LMG 26770 / FZB42) (Bacillus amyloliquefaciens subsp. plantarum)).